The primary structure comprises 152 residues: Cytosolic calcium-binding protein 1 (152 aa).

7 repeat units span residues 57–62 (VEETEK), 67–71 (TEEAQ), 78–82 (VEIKK), 104–108 (VEAKK), 112–116 (VEEKK), 124–129 (VEEEKK), and 131–136 (EAEEEK). The 7 X 5 AA approximate repeats of V-E-E-K-K stretch occupies residues 57-136 (VEETEKPIEE…EKKPEAEEEK (80 aa)). A disordered region spans residues 60 to 152 (TEKPIEETEE…VTAPVEKADE (93 aa)). A compositionally biased stretch (basic and acidic residues) spans 96-138 (DESKTEEVVEAKKEEEVEEKKTEEAPVVVEEEKKPEAEEEKPA).

As to expression, predominantly expressed in petioles (at protein level). Mainly observed in shoots, flowers, siliques and roots, and, to a lower extent, in stems and leaves.

The protein resides in the cytoplasm. It localises to the cytosol. Binds calcium Ca(2+) and may act as a signal mediator to buffer Ca(2+). The protein is Cytosolic calcium-binding protein 1 of Arabidopsis thaliana (Mouse-ear cress).